The primary structure comprises 126 residues: LWamide neuropeptides (126 aa).

Residues 1-2 constitute a propeptide, 1; that stretch reads KR. Residues 1–126 are disordered; the sequence is KRQQPGLWGR…KSAIPKAKPQ (126 aa). Residue Trp8 is modified to Tryptophan amide. The propeptide at 11–15 is 2; it reads SADPQ. 2 positions are modified to tryptophan amide: Trp20 and Trp29. A propeptide spans 32 to 36 (2); that stretch reads SADPQ. A tryptophan amide mark is found at Trp41 and Trp50. Positions 53-57 are cleaved as a propeptide — 2; it reads SADPQ. Residues Trp62 and Trp71 each carry the tryptophan amide modification. The propeptide at 74–78 is 2; sequence SADPQ. Trp83 is subject to Tryptophan amide. Positions 86-93 are cleaved as a propeptide — 3; sequence SAGSGKRQ. Tryptophan amide is present on Trp99. Positions 102 to 126 are cleaved as a propeptide — 4; sequence SAEPPQYKELEDLKQKSAIPKAKPQ. Positions 107–116 are enriched in basic and acidic residues; sequence QYKELEDLKQ.

This sequence belongs to the LWamide neuropeptide family.

The protein localises to the secreted. In terms of biological role, metamorphosin A may be part of an internal signaling system involved in control of metamorphosis. This Anemonia sulcata (Mediterranean snakelocks sea anemone) protein is LWamide neuropeptides.